Consider the following 556-residue polypeptide: Glutamine--tRNA ligase (556 aa).

The 'HIGH' region signature appears at 34–44 (PEPNGYLHIGH). ATP is bound by residues 35-37 (EPN) and 41-47 (HIGHAKS). L-glutamine-binding residues include Asp67 and Tyr212. ATP contacts are provided by residues Thr231, 261–262 (RL), and 269–271 (MSK). The 'KMSKS' region signature appears at 268–272 (VMSKR).

This sequence belongs to the class-I aminoacyl-tRNA synthetase family. In terms of assembly, monomer.

It is found in the cytoplasm. The catalysed reaction is tRNA(Gln) + L-glutamine + ATP = L-glutaminyl-tRNA(Gln) + AMP + diphosphate. The chain is Glutamine--tRNA ligase from Vibrio vulnificus (strain YJ016).